Reading from the N-terminus, the 141-residue chain is Hemoglobin subunit alpha (141 aa).

The region spanning 1 to 141 (VLSAADKTAI…VATALGSHYR (141 aa)) is the Globin domain. H59 is an O2 binding site. H88 provides a ligand contact to heme b.

Belongs to the globin family. As to quaternary structure, heterotetramer of two alpha chains and two beta chains. In terms of tissue distribution, red blood cells.

Functionally, involved in oxygen transport from the lung to the various peripheral tissues. The sequence is that of Hemoglobin subunit alpha (HBA) from Squalus acanthias (Spiny dogfish).